Reading from the N-terminus, the 113-residue chain is Ig kappa chain V-II region 26-10 (113 aa).

Positions aspartate 1 to cysteine 23 are framework-1. An intrachain disulfide couples cysteine 23 to cysteine 93. Positions arginine 24 to asparagine 39 are complementarity-determining-1. The segment at tryptophan 40–tyrosine 54 is framework-2. Positions lysine 55–serine 61 are complementarity-determining-2. The interval glycine 62–cysteine 93 is framework-3. The segment at serine 94–threonine 102 is complementarity-determining-3. The tract at residues phenylalanine 103 to lysine 112 is framework-4.

This chain is Ig kappa chain V-II region 26-10, found in Mus musculus (Mouse).